Here is a 161-residue protein sequence, read N- to C-terminus: Epoxidase gkaX (161 aa).

The signal sequence occupies residues 1–18 (MSLSTSLRLLRLLPAISS). N-linked (GlcNAc...) asparagine glycosylation occurs at Asn-45. Transmembrane regions (helical) follow at residues 59–79 (WQWILIIGYPLNYLFGILNLV), 92–112 (IWYVLGLFFSVGHMLFVKMAL), and 139–159 (WVRALITDLPAWICWIMAAVS).

The protein belongs to the epoxidase xenD family.

The protein resides in the membrane. It participates in mycotoxin biosynthesis. Its function is as follows. Epoxidase; part of the gene cluster that mediates the biosynthesis of GKK1032, fungal natural products containing a macrocyclic para-cyclophane connected to a decahydrofluorene ring system that show potent antitumor activities. Within the pathway, gkaX functions synergistically with gkaB and gkaZ to form the cyclophane. The pathway begins with the PKS-NRPS gkaA which, with the help of the trans-enoyl reductase gkaC, synthesizes the polyketide-tyrosyl acyl thioester product which can be reductively off-loaded by the terminal reductase (R) domain in gkaA. The alpha/beta hydrolase gkaG is then required to catalyze the subsequent Knoevenagel condensation that affords the 3-pyrrolin-2-one ring, whereas the three proteins gkaB, gkaX and gkaZ then function synergistically to form the cyclophane. This is Epoxidase gkaX from Penicillium citrinum.